The chain runs to 123 residues: Small ribosomal subunit protein uS12c (123 aa).

The protein belongs to the universal ribosomal protein uS12 family. As to quaternary structure, part of the 30S ribosomal subunit.

Its subcellular location is the plastid. It is found in the chloroplast. In terms of biological role, with S4 and S5 plays an important role in translational accuracy. Located at the interface of the 30S and 50S subunits. In Chaetosphaeridium globosum (Charophycean green alga), this protein is Small ribosomal subunit protein uS12c (rps12).